The sequence spans 416 residues: 4-hydroxy-3-methylbut-2-en-1-yl diphosphate synthase (flavodoxin) (416 aa).

Residues Cys304, Cys307, Cys350, and Glu357 each contribute to the [4Fe-4S] cluster site.

The protein belongs to the IspG family. Requires [4Fe-4S] cluster as cofactor.

It carries out the reaction (2E)-4-hydroxy-3-methylbut-2-enyl diphosphate + oxidized [flavodoxin] + H2O + 2 H(+) = 2-C-methyl-D-erythritol 2,4-cyclic diphosphate + reduced [flavodoxin]. It participates in isoprenoid biosynthesis; isopentenyl diphosphate biosynthesis via DXP pathway; isopentenyl diphosphate from 1-deoxy-D-xylulose 5-phosphate: step 5/6. Converts 2C-methyl-D-erythritol 2,4-cyclodiphosphate (ME-2,4cPP) into 1-hydroxy-2-methyl-2-(E)-butenyl 4-diphosphate. The sequence is that of 4-hydroxy-3-methylbut-2-en-1-yl diphosphate synthase (flavodoxin) from Burkholderia pseudomallei (strain K96243).